A 399-amino-acid chain; its full sequence is Proteinase-activated receptor 2 (399 aa).

A signal peptide spans 1 to 25 (MRSLSLAWLLGGITLLAASVSCSRT). The propeptide at 26 to 38 (ENLAPGRNNSKGR) is removed for receptor activation. Residue N33 is glycosylated (N-linked (GlcNAc...) asparagine). The Extracellular portion of the chain corresponds to 39–73 (SLIGRLETQPPITGKGVPVEPGFSIDEFSASILTG). A helical membrane pass occupies residues 74-103 (KLTTVFLPVVYIIVFVIGLPSNGMALWIFL). Residues 104–110 (FRTKKKH) are Cytoplasmic-facing. Residues 111 to 139 (PAVIYMANLALADLLSVIWFPLKISYHLH) traverse the membrane as a helical segment. Residues 140–151 (GNNWVYGEALCK) lie on the Extracellular side of the membrane. Cysteines 150 and 228 form a disulfide. Residues 152–179 (VLIGFFYGNMYCSILFMTCLSVQRYWVI) form a helical membrane-spanning segment. The Cytoplasmic portion of the chain corresponds to 180–185 (VNPMGH). Residues 186 to 213 (PRKKANIAVGVSLAIWLLIFLVTIPLYV) form a helical membrane-spanning segment. The Extracellular segment spans residues 214-237 (MKQTIYIPALNITTCHDVLPEEVL). N224 carries N-linked (GlcNAc...) asparagine glycosylation. A helical transmembrane segment spans residues 238-271 (VGDMFNYFLSLAIGVFLFPALLTASAYVLMIKTL). Residues 272–279 (RSSAMDEH) lie on the Cytoplasmic side of the membrane. A helical membrane pass occupies residues 280-319 (SEKKRQRAIRLIITVLAMYFICFAPSNLLLVVHYFLIKTQ). Topologically, residues 320-325 (RQSHVY) are extracellular. A helical transmembrane segment spans residues 326 to 349 (ALYLVALCLSTLNSCIDPFVYYFV). Over 350-399 (SKDFRDHARNALLCRSVRTVNRMQISLSSNKFSRKSGSYSSSSTSVKTSY) the chain is Cytoplasmic. A lipid anchor (S-palmitoyl cysteine) is attached at C363.

It belongs to the G-protein coupled receptor 1 family. As to quaternary structure, interacts with TLR4, COPS5 and TMED2. Interacts with GNAQ, GNA11, GNA12, GNA13 and GNA14. A proteolytic cleavage generates a new N-terminus that functions as a tethered ligand. Activating serine proteases include trypsin, mast cell tryptase, coagulation factors VII and Xa, myeloblastin/PRTN3 and membrane-type serine protease 1/ST14. Proposed subsequent cleavage by serine proteases is leading to receptor deactivation and include neutrophil elastase and cathepsin G. At least in part, implicated proteases are also shown to activate the receptor; the glycosylation status of the receptor is thought to contribute to the difference. In terms of processing, N-glycosylated and sialylated. Post-translationally, multiple phosphorylated on serine and threonine residues in the cytoplasmic region upon receptor activation; required for receptor desensitization and recruitment of beta-arrestin. Monoubiquitinated by Cbl at the plasma membrane and in early endosomes; not required for receptor endocytosis but for translocation to late endosomes or lysosomes. Deubiquitination involves Stambp and Usp8; required for lysosomal trafficking and receptor degradation.

Its subcellular location is the cell membrane. Its function is as follows. Receptor for trypsin and trypsin-like enzymes coupled to G proteins. Its function is mediated through the activation of several signaling pathways including phospholipase C (PLC), intracellular calcium, mitogen-activated protein kinase (MAPK), I-kappaB kinase/NF-kappaB and Rho. Can also be transactivated by cleaved F2r/Par1. Involved in modulation of inflammatory responses and regulation of innate and adaptive immunity, and acts as a sensor for proteolytic enzymes generated during infection. Generally is promoting inflammation. Can signal synergistically with Tlr4 and probably Tlr2 in inflammatory responses and modulates Tlr3 signaling. Has a protective role in establishing the endothelial barrier; the activity involves coagulation factor X. Regulates endothelial cell barrier integrity during neutrophil extravasation, probably following proteolytic cleavage by PRTN3. Proposed to have a bronchoprotective role in airway epithelium, but also shown to compromise the airway epithelial barrier by interrupting E-cadherin adhesion. Involved in the regulation of vascular tone; activation results in hypotension presumably mediated by vasodilation. Associates with a subset of G proteins alpha subunits such as GNAQ, GNA11, GNA14, GNA12 and GNA13, but probably not with G(o)-alpha, G(i) subunit alpha-1 and G(i) subunit alpha-2. Believed to be a class B receptor which internalizes as a complex with arrestin and traffic with it to endosomal vesicles, presumably as desensitized receptor, for extended periods of time. Mediates inhibition of TNF-alpha stimulated JNK phosphorylation via coupling to GNAQ and GNA11; the function involves dissociation of Ripk1 and Tradd from Tnfr1. Mediates phosphorylation of nuclear factor NF-kappa-B RELA subunit at 'Ser-536'; the function involves Ikbkb and is predominantly independent of G proteins. Involved in cellular migration. Involved in cytoskeletal rearrangement and chemotaxis through beta-arrestin-promoted scaffolds; the function is independent of GNAQ and GNA11 and involves promotion of cofilin dephosphorylation and actin filament severing. Induces redistribution of Cops5 from the plasma membrane to the cytosol and activation of the JNK cascade is mediated by Cops5. Involved in the recruitment of leukocytes to the sites of inflammation and is the major PAR receptor capable of modulating eosinophil function such as pro-inflammatory cytokine secretion, superoxide production and degranulation. During inflammation promotes dendritic cell maturation, trafficking to the lymph nodes and subsequent T-cell activation. Involved in antimicrobial response of innate immune cells; activation enhances phagocytosis of Gram-positive and killing of Gram-negative bacteria. Acts synergistically with interferon-gamma in enhancing antiviral responses. Mediates activation of pro-inflammatory and pro-fibrotic responses in fibroblasts, triggered by coagulation factor Xa (F10). Probably mediates activation of barrier protective signaling responses in endothelial cells, triggered by coagulation factor Xa (F10). The polypeptide is Proteinase-activated receptor 2 (F2rl1) (Mus musculus (Mouse)).